Reading from the N-terminus, the 232-residue chain is 7-cyano-7-deazaguanine synthase (232 aa).

An ATP-binding site is contributed by 7–17; it reads CSGGLDSVSLA. Zn(2+)-binding residues include cysteine 185, cysteine 193, cysteine 196, and cysteine 199.

This sequence belongs to the QueC family. Zn(2+) serves as cofactor.

It carries out the reaction 7-carboxy-7-deazaguanine + NH4(+) + ATP = 7-cyano-7-deazaguanine + ADP + phosphate + H2O + H(+). The protein operates within purine metabolism; 7-cyano-7-deazaguanine biosynthesis. Catalyzes the ATP-dependent conversion of 7-carboxy-7-deazaguanine (CDG) to 7-cyano-7-deazaguanine (preQ(0)). This is 7-cyano-7-deazaguanine synthase from Chelativorans sp. (strain BNC1).